We begin with the raw amino-acid sequence, 204 residues long: Probable chorismate pyruvate-lyase (204 aa).

Residues R78, L131, and E190 each contribute to the substrate site.

Belongs to the UbiC family.

The protein localises to the cytoplasm. It catalyses the reaction chorismate = 4-hydroxybenzoate + pyruvate. It functions in the pathway cofactor biosynthesis; ubiquinone biosynthesis. In terms of biological role, removes the pyruvyl group from chorismate, with concomitant aromatization of the ring, to provide 4-hydroxybenzoate (4HB) for the ubiquinone pathway. The protein is Probable chorismate pyruvate-lyase of Shewanella frigidimarina (strain NCIMB 400).